The primary structure comprises 239 residues: MEERPERLISEDGLRLDGRKPDEMRPLKIQAGVLKRADGSAYLELGANKIVAAVYGPRELHPRHKQKPDRAVVRFRYNMAPFSVDERKRPGPDRRSIEISKLSKEALEPAIFTEYYPRTAIDIFVEVLQADAGTRCAGISAASVALADAGIEMRDLVAACAAGKVEGKVVLDPMYYEDGYGEADVPLAMMPKEGKITLLQMDGDMTPGEFKQAVKLAKKGCKIVYKEQRRALKEKYGGD.

The segment at 1-21 is disordered; the sequence is MEERPERLISEDGLRLDGRKP.

Belongs to the RNase PH family. Rrp41 subfamily. Component of the archaeal exosome complex. Forms a hexameric ring-like arrangement composed of 3 Rrp41-Rrp42 heterodimers. The hexameric ring associates with a trimer of Rrp4 and/or Csl4 subunits.

It is found in the cytoplasm. Functionally, catalytic component of the exosome, which is a complex involved in RNA degradation. Has 3'-&gt;5' exoribonuclease activity. Can also synthesize heteromeric RNA-tails. This is Exosome complex component Rrp41 from Methanopyrus kandleri (strain AV19 / DSM 6324 / JCM 9639 / NBRC 100938).